The chain runs to 88 residues: Phosphocarrier protein HPr (88 aa).

Residues 1 to 88 (MAQKTFTVTA…DTMSKEGLGE (88 aa)) enclose the HPr domain. Ser12 is subject to Phosphoserine. The active-site Pros-phosphohistidine intermediate is the His15. Phosphoserine; by HPrK/P is present on Ser46.

The protein belongs to the HPr family.

The protein localises to the cytoplasm. Phosphorylation on Ser-46 inhibits the phosphoryl transfer from enzyme I to HPr. General (non sugar-specific) component of the phosphoenolpyruvate-dependent sugar phosphotransferase system (sugar PTS). This major carbohydrate active-transport system catalyzes the phosphorylation of incoming sugar substrates concomitantly with their translocation across the cell membrane. The phosphoryl group from phosphoenolpyruvate (PEP) is transferred to the phosphoryl carrier protein HPr by enzyme I. Phospho-HPr then transfers it to the PTS EIIA domain. In terms of biological role, P-Ser-HPr interacts with the catabolite control protein A (CcpA), forming a complex that binds to DNA at the catabolite response elements cre, operator sites preceding a large number of catabolite-regulated genes. Thus, P-Ser-HPr is a corepressor in carbon catabolite repression (CCR), a mechanism that allows bacteria to coordinate and optimize the utilization of available carbon sources. P-Ser-HPr also plays a role in inducer exclusion, in which it probably interacts with several non-PTS permeases and inhibits their transport activity. The protein is Phosphocarrier protein HPr (ptsH) of Priestia megaterium (Bacillus megaterium).